Consider the following 714-residue polypeptide: Fatty acid oxidation complex subunit alpha (714 aa).

Residues 1 to 190 (MEMASAFTLN…KLGLVDDVVP (190 aa)) form an enoyl-CoA hydratase region. A 3-hydroxyacyl-CoA dehydrogenase region spans residues 306–714 (APLNSVGILG…FWKTTATDLQ (409 aa)).

In the N-terminal section; belongs to the enoyl-CoA hydratase/isomerase family. This sequence in the central section; belongs to the 3-hydroxyacyl-CoA dehydrogenase family. In terms of assembly, heterotetramer of two alpha chains (FadJ) and two beta chains (FadI).

Its subcellular location is the cytoplasm. It carries out the reaction a (3S)-3-hydroxyacyl-CoA = a (2E)-enoyl-CoA + H2O. The enzyme catalyses a 4-saturated-(3S)-3-hydroxyacyl-CoA = a (3E)-enoyl-CoA + H2O. The catalysed reaction is a (3S)-3-hydroxyacyl-CoA + NAD(+) = a 3-oxoacyl-CoA + NADH + H(+). It catalyses the reaction (3S)-3-hydroxybutanoyl-CoA = (3R)-3-hydroxybutanoyl-CoA. It participates in lipid metabolism; fatty acid beta-oxidation. Functionally, catalyzes the formation of a hydroxyacyl-CoA by addition of water on enoyl-CoA. Also exhibits 3-hydroxyacyl-CoA epimerase and 3-hydroxyacyl-CoA dehydrogenase activities. This chain is Fatty acid oxidation complex subunit alpha, found in Shigella flexneri.